A 38-amino-acid polypeptide reads, in one-letter code: Putative defensin-like protein 105 (38 aa).

3 disulfides stabilise this stretch: C5–C27, C13–C33, and C17–C34.

It belongs to the DEFL family.

This chain is Putative defensin-like protein 105, found in Arabidopsis thaliana (Mouse-ear cress).